The primary structure comprises 187 residues: Peptide deformylase (187 aa).

2 residues coordinate Fe cation: Cys96 and His138. The active site involves Glu139. His142 provides a ligand contact to Fe cation.

It belongs to the polypeptide deformylase family. The cofactor is Fe(2+).

The enzyme catalyses N-terminal N-formyl-L-methionyl-[peptide] + H2O = N-terminal L-methionyl-[peptide] + formate. In terms of biological role, removes the formyl group from the N-terminal Met of newly synthesized proteins. Requires at least a dipeptide for an efficient rate of reaction. N-terminal L-methionine is a prerequisite for activity but the enzyme has broad specificity at other positions. This chain is Peptide deformylase, found in Brachyspira hyodysenteriae (strain ATCC 49526 / WA1).